The sequence spans 381 residues: Homoserine O-succinyltransferase (381 aa).

One can recognise an AB hydrolase-1 domain in the interval 45-360; that stretch reads NAVLVCHALN…PHGHDAFLLD (316 aa). Residue serine 151 is the Nucleophile of the active site. Position 221 (arginine 221) interacts with substrate. Residues aspartate 321 and histidine 354 contribute to the active site. A substrate-binding site is contributed by aspartate 355.

This sequence belongs to the AB hydrolase superfamily. MetX family. As to quaternary structure, homodimer.

Its subcellular location is the cytoplasm. It carries out the reaction L-homoserine + succinyl-CoA = O-succinyl-L-homoserine + CoA. It participates in amino-acid biosynthesis; L-methionine biosynthesis via de novo pathway; O-succinyl-L-homoserine from L-homoserine: step 1/1. Functionally, transfers a succinyl group from succinyl-CoA to L-homoserine, forming succinyl-L-homoserine. This is Homoserine O-succinyltransferase from Burkholderia ambifaria (strain MC40-6).